A 376-amino-acid polypeptide reads, in one-letter code: MAVSKFIQIRRDLHKIPEIGFKEWKTQQYILDYIGTLSNEHVEVKVWETGVIVKVNGKNPEKIIGYRADIDGLPITEETGYEFASIHEGMMHACGHDVHTTIGLGLLTAAVTERIDDDLVFLFQPAEEGPGGALPMLESEELKEWKPNIILGLHIAPEYPVGTIATKEGLLFANTSELYVDLKGKGGHAAYPHTANDMIVAASHLVTQLQSVISRNVNPLDSAVITIGKITGGTVQNIIAEKSRLEGTIRTLSVESMSRVKSRIEAIIAGIEASFQCEAVIDYGAMYHQVYNHEALTREFMQFVSEQTDMKVITCTEAMTGEDFGYMLQEIPGFMFWLGVNSEYGLHHAKLKPDEEAIEKAIVFLDQYVKWKGTRK.

The active site involves Asp-69. Residue Glu-128 is the Proton acceptor of the active site.

This sequence belongs to the peptidase M20A family. N-acetyldiaminopimelate deacetylase subfamily.

The enzyme catalyses N-acetyl-(2S,6S)-2,6-diaminopimelate + H2O = (2S,6S)-2,6-diaminopimelate + acetate. It participates in amino-acid biosynthesis; L-lysine biosynthesis via DAP pathway; LL-2,6-diaminopimelate from (S)-tetrahydrodipicolinate (acetylase route): step 3/3. Its function is as follows. Catalyzes the conversion of N-acetyl-diaminopimelate to diaminopimelate and acetate. The chain is N-acetyldiaminopimelate deacetylase from Bacillus cereus (strain 03BB102).